Here is a 499-residue protein sequence, read N- to C-terminus: U4/U6 small nuclear ribonucleoprotein Prp31 (499 aa).

The tract at residues 1-43 (MSLADELLADLEEAAEEEEGGSYGEEEEEPAIEDVQEETQLDL) is disordered. Over residues 7–40 (LLADLEEAAEEEEGGSYGEEEEEPAIEDVQEETQ) the composition is skewed to acidic residues. Coiled coils occupy residues 85–120 (EAAP…KYSK) and 181–215 (DEEL…MSFI). Positions 215-333 (IAPNLSIIIG…IERKFDKWQE (119 aa)) constitute a Nop domain. Residues 334-357 (PPPVKQVKPLPAPLDGQRKKRGGR) form a disordered region. The Nuclear localization signal (NLS) motif lies at 351-364 (RKKRGGRRYRKMKE). Phosphoserine is present on residues Ser379, Ser395, and Ser432. Lys438 carries the N6-acetyllysine modification. Ser439 is subject to Phosphoserine. The residue at position 440 (Thr440) is a Phosphothreonine. Ser450 carries the phosphoserine modification. Thr455 is subject to Phosphothreonine. Glycyl lysine isopeptide (Lys-Gly) (interchain with G-Cter in SUMO2) cross-links involve residues Lys471 and Lys478.

Belongs to the PRP31 family. In terms of assembly, identified in the spliceosome B complex. Component of the U4/U6-U5 tri-snRNP complex composed of the U4, U6 and U5 snRNAs and at least PRPF3, PRPF4, PRPF6, PRPF8, PRPF31, SNRNP200, TXNL4A, SNRNP40, DDX23, CD2BP2, PPIH, SNU13, EFTUD2, SART1 and USP39. Interacts with a complex formed by SNU13 and U4 snRNA, but not with SNU13 or U4 snRNA alone. The complex formed by SNU13 and PRPF31 also binds U4atac snRNA, a characteristic component of specific, less abundant spliceosomal complexes. Interacts with PRPF6/U5 snRNP-associated 102 kDa protein. Component of some MLL1/MLL complex, at least composed of the core components KMT2A/MLL1, ASH2L, HCFC1/HCF1, WDR5 and RBBP5, as well as the facultative components BACC1, CHD8, E2F6, HSP70, INO80C, KANSL1, LAS1L, MAX, MCRS1, MGA, KAT8/MOF, PELP1, PHF20, PRP31, RING2, RUVB1/TIP49A, RUVB2/TIP49B, SENP3, TAF1, TAF4, TAF6, TAF7, TAF9 and TEX10. Interacts (via its NLS) with CTNNBL1. Interacts with USH1G. Phosphorylated by PRP4K during spliceosome assembly.

It is found in the nucleus. The protein localises to the nucleus speckle. The protein resides in the cajal body. Its function is as follows. Involved in pre-mRNA splicing as component of the spliceosome. Required for the assembly of the U4/U5/U6 tri-snRNP complex, one of the building blocks of the spliceosome. This chain is U4/U6 small nuclear ribonucleoprotein Prp31 (Prpf31), found in Mus musculus (Mouse).